Reading from the N-terminus, the 126-residue chain is Glycine cleavage system H protein (126 aa).

One can recognise a Lipoyl-binding domain in the interval 22-103 (KAYIGITDYA…PYGSWMALVE (82 aa)). The residue at position 63 (K63) is an N6-lipoyllysine.

The protein belongs to the GcvH family. As to quaternary structure, the glycine cleavage system is composed of four proteins: P, T, L and H. (R)-lipoate is required as a cofactor.

In terms of biological role, the glycine cleavage system catalyzes the degradation of glycine. The H protein shuttles the methylamine group of glycine from the P protein to the T protein. The sequence is that of Glycine cleavage system H protein from Thermoanaerobacter pseudethanolicus (strain ATCC 33223 / 39E) (Clostridium thermohydrosulfuricum).